A 264-amino-acid polypeptide reads, in one-letter code: S-adenosylmethionine decarboxylase proenzyme (264 aa).

Ser111 serves as the catalytic Schiff-base intermediate with substrate; via pyruvic acid. Ser111 is subject to Pyruvic acid (Ser); by autocatalysis. The Proton acceptor; for processing activity role is filled by His116. Cys139 serves as the catalytic Proton donor; for catalytic activity.

This sequence belongs to the prokaryotic AdoMetDC family. Type 2 subfamily. As to quaternary structure, heterooctamer of four alpha and four beta chains arranged as a tetramer of alpha/beta heterodimers. It depends on pyruvate as a cofactor. Post-translationally, is synthesized initially as an inactive proenzyme. Formation of the active enzyme involves a self-maturation process in which the active site pyruvoyl group is generated from an internal serine residue via an autocatalytic post-translational modification. Two non-identical subunits are generated from the proenzyme in this reaction, and the pyruvate is formed at the N-terminus of the alpha chain, which is derived from the carboxyl end of the proenzyme. The post-translation cleavage follows an unusual pathway, termed non-hydrolytic serinolysis, in which the side chain hydroxyl group of the serine supplies its oxygen atom to form the C-terminus of the beta chain, while the remainder of the serine residue undergoes an oxidative deamination to produce ammonia and the pyruvoyl group blocking the N-terminus of the alpha chain.

It carries out the reaction S-adenosyl-L-methionine + H(+) = S-adenosyl 3-(methylsulfanyl)propylamine + CO2. It functions in the pathway amine and polyamine biosynthesis; S-adenosylmethioninamine biosynthesis; S-adenosylmethioninamine from S-adenosyl-L-methionine: step 1/1. In terms of biological role, catalyzes the decarboxylation of S-adenosylmethionine to S-adenosylmethioninamine (dcAdoMet), the propylamine donor required for the synthesis of the polyamines spermine and spermidine from the diamine putrescine. In Geobacillus kaustophilus (strain HTA426), this protein is S-adenosylmethionine decarboxylase proenzyme.